The primary structure comprises 1681 residues: Probable clathrin heavy chain 1 (1681 aa).

WD40-like repeat stretches follow at residues 22–65 (NITF…RPIS), 66–105 (ADSV…NVED), 106–147 (VVYW…QSLA), 148–193 (GTQI…QPIE), 194–255 (GHAA…ADTA), 256–299 (GDFP…ISTD), and 300–328 (TVFV…VSID). 7 CHCR repeats span residues 539 to 685 (SENG…QVVV), 688 to 830 (ASKY…SEDA), 835 to 974 (IINT…QLID), 981 to 1126 (LSET…VKEA), 1130 to 1271 (FIKA…FRLA), 1276 to 1422 (LHIV…LLLN), and 1425 to 1568 (LTVL…YDCF). Positions 1616 to 1628 (ERSEHERKEEKAE) are enriched in basic and acidic residues. Residues 1616-1635 (ERSEHERKEEKAEQQQNNGM) form a disordered region.

The protein belongs to the clathrin heavy chain family. As to quaternary structure, clathrin triskelions, composed of 3 heavy chains and 3 light chains, are the basic subunits of the clathrin coat. May interact with beta arrestin arr-1.

Its subcellular location is the cytoplasmic vesicle membrane. The protein resides in the membrane. The protein localises to the coated pit. In terms of biological role, clathrin is the major protein of the polyhedral coat of coated pits and vesicles. May play a role in yolk protein clatherin-mediated endocytosis by oocytes during oogenesis. This chain is Probable clathrin heavy chain 1 (chc-1), found in Caenorhabditis elegans.